The sequence spans 290 residues: Porphobilinogen deaminase (290 aa).

Residue cysteine 238 is modified to S-(dipyrrolylmethanemethyl)cysteine.

Belongs to the HMBS family. As to quaternary structure, monomer. Dipyrromethane serves as cofactor.

The catalysed reaction is 4 porphobilinogen + H2O = hydroxymethylbilane + 4 NH4(+). It participates in porphyrin-containing compound metabolism; protoporphyrin-IX biosynthesis; coproporphyrinogen-III from 5-aminolevulinate: step 2/4. Functionally, tetrapolymerization of the monopyrrole PBG into the hydroxymethylbilane pre-uroporphyrinogen in several discrete steps. This is Porphobilinogen deaminase from Caldicellulosiruptor saccharolyticus (strain ATCC 43494 / DSM 8903 / Tp8T 6331).